The chain runs to 373 residues: UDP-N-acetylenolpyruvoylglucosamine reductase (373 aa).

Positions 30–203 constitute an FAD-binding PCMH-type domain; sequence LACTANSVVT…SRVGFRLHTD (174 aa). Residue arginine 180 is part of the active site. Serine 258 acts as the Proton donor in catalysis. Glutamate 356 is an active-site residue.

This sequence belongs to the MurB family. FAD serves as cofactor.

It is found in the cytoplasm. The enzyme catalyses UDP-N-acetyl-alpha-D-muramate + NADP(+) = UDP-N-acetyl-3-O-(1-carboxyvinyl)-alpha-D-glucosamine + NADPH + H(+). It functions in the pathway cell wall biogenesis; peptidoglycan biosynthesis. Functionally, cell wall formation. In Psychrobacter arcticus (strain DSM 17307 / VKM B-2377 / 273-4), this protein is UDP-N-acetylenolpyruvoylglucosamine reductase.